Here is a 286-residue protein sequence, read N- to C-terminus: NAD kinase (286 aa).

The active-site Proton acceptor is the Asp68. NAD(+) contacts are provided by residues 68–69, Lys73, 142–143, Arg153, Asp172, 183–188, and Gln242; these read DG, ND, and TGYSFS.

This sequence belongs to the NAD kinase family. A divalent metal cation serves as cofactor.

Its subcellular location is the cytoplasm. It catalyses the reaction NAD(+) + ATP = ADP + NADP(+) + H(+). Involved in the regulation of the intracellular balance of NAD and NADP, and is a key enzyme in the biosynthesis of NADP. Catalyzes specifically the phosphorylation on 2'-hydroxyl of the adenosine moiety of NAD to yield NADP. This Natranaerobius thermophilus (strain ATCC BAA-1301 / DSM 18059 / JW/NM-WN-LF) protein is NAD kinase.